The primary structure comprises 457 residues: Aromatic amino acid permease FywP (457 aa).

The next 12 helical transmembrane spans lie at 16–36 (IVMLSLGGAIGSGLFLGSGKV), 43–63 (SVLLSYVLAGLTLYVVMYGVG), 91–111 (FADWVYWATWMAVLIAEEAGV), 114–134 (FLAILIPGVPLWVFALVVAVL), 154–174 (AFIKVAVILLLIALGIYLLVI), 205–225 (GFLTSLLVVIFSFGGSELAAI), 243–263 (GVLIRIISFYVIPIFLFLHLL), 292–312 (IVLVIIVIAIFSAVNSAIYAT), 342–362 (NAILVSSFVLFIGVLLSAVLG), 373–393 (ISFTISIVWILLLVAALVLYF), 403–423 (VKLATLVVLIALSLVFIMQII), and 424–444 (TNPWTLSVFALVICLLSYFSY).

Belongs to the amino acid-polyamine-organocation (APC) superfamily. Amino acid transporter (AAT) (TC 2.A.3.1) family.

The protein resides in the cell membrane. Involved in phenylalanine and tyrosine uptake. Also has affinity for tryptophan. Plays no significant role in the excretion of accumulated phenylalanine. In Lactococcus lactis subsp. cremoris (strain MG1363), this protein is Aromatic amino acid permease FywP.